The primary structure comprises 551 residues: RCC1 and BTB domain-containing protein 2 (551 aa).

RCC1 repeat units follow at residues 64 to 115 (NDEI…VLAT), 117 to 169 (DGEV…VLTS), 171 to 222 (GEVF…AVVD), 223 to 274 (TGEV…VLTD), 276 to 326 (GQIY…AAKT), and 328 to 382 (GGHV…TVAE). Residues 394-457 (ADLKFLVDGK…LYTDNISLSP (64 aa)) enclose the BTB domain.

In terms of tissue distribution, expressed in testis and heart (at protein level).

The protein resides in the cytoplasmic vesicle. The protein localises to the secretory vesicle. It is found in the acrosome. The polypeptide is RCC1 and BTB domain-containing protein 2 (Rcbtb2) (Mus musculus (Mouse)).